The sequence spans 316 residues: Pantothenate kinase (316 aa).

95-102 (GSVAVGKS) provides a ligand contact to ATP.

This sequence belongs to the prokaryotic pantothenate kinase family.

It is found in the cytoplasm. It catalyses the reaction (R)-pantothenate + ATP = (R)-4'-phosphopantothenate + ADP + H(+). It participates in cofactor biosynthesis; coenzyme A biosynthesis; CoA from (R)-pantothenate: step 1/5. This Sodalis glossinidius (strain morsitans) protein is Pantothenate kinase.